Consider the following 83-residue polypeptide: U-actitoxin-Avd8d (83 aa).

Residues 1 to 19 (MASTRLFVLLVIGTVLLCQ) form the signal peptide. Residues 20–38 (VSGFLDELLAEHELPQDMT) constitute a propeptide that is removed on maturation.

This sequence belongs to the sea anemone 8 toxin family.

It localises to the secreted. Its subcellular location is the nematocyst. The sequence is that of U-actitoxin-Avd8d from Anemonia viridis (Snakelocks anemone).